The primary structure comprises 405 residues: Multi-drug resistance efflux pump PmrA homolog (405 aa).

The next 12 membrane-spanning stretches (helical) occupy residues 13 to 33 (LFIT…VMPF), 50 to 70 (LYSG…APIW), 88 to 108 (IVMT…WLLG), 111 to 131 (LLMG…ASQA), 147 to 167 (MVSG…WFGM), 170 to 190 (VFLI…FFVH), 216 to 236 (ILFG…SIEP), 254 to 274 (FISG…SSFL), 286 to 306 (LILI…FVQS), 308 to 328 (LQLG…TPSV), 350 to 370 (MCSN…AGYI), and 374 to 394 (AAIV…FINF).

The protein belongs to the major facilitator superfamily. TCR/Tet family.

The protein resides in the cell membrane. In terms of biological role, efflux pump for various substrates. In Lactococcus lactis subsp. lactis (strain IL1403) (Streptococcus lactis), this protein is Multi-drug resistance efflux pump PmrA homolog (pmrA).